The sequence spans 338 residues: Glycerol-3-phosphate dehydrogenase [NAD(P)+] (338 aa).

The NADPH site is built by S15, Y16, H36, and K110. The sn-glycerol 3-phosphate site is built by K110, G139, and T141. A143 contributes to the NADPH binding site. Positions 195, 248, 258, 259, and 260 each coordinate sn-glycerol 3-phosphate. The active-site Proton acceptor is the K195. R259 is a binding site for NADPH. Residues V283 and E285 each coordinate NADPH.

This sequence belongs to the NAD-dependent glycerol-3-phosphate dehydrogenase family.

It is found in the cytoplasm. The enzyme catalyses sn-glycerol 3-phosphate + NAD(+) = dihydroxyacetone phosphate + NADH + H(+). The catalysed reaction is sn-glycerol 3-phosphate + NADP(+) = dihydroxyacetone phosphate + NADPH + H(+). It functions in the pathway membrane lipid metabolism; glycerophospholipid metabolism. Its function is as follows. Catalyzes the reduction of the glycolytic intermediate dihydroxyacetone phosphate (DHAP) to sn-glycerol 3-phosphate (G3P), the key precursor for phospholipid synthesis. This chain is Glycerol-3-phosphate dehydrogenase [NAD(P)+], found in Edwardsiella ictaluri (strain 93-146).